Here is a 793-residue protein sequence, read N- to C-terminus: Toll-like receptor 6 (793 aa).

The first 23 residues, 1–23 (MIKDKESPIRSCHFVYIVALVFG), serve as a signal peptide directing secretion. Topologically, residues 24 to 584 (TIIQFSDESE…FQVSELSCNT (561 aa)) are extracellular. LRR repeat units lie at residues 54 to 77 (TKVL…FLSG), 78 to 101 (LRVL…FNHD), 102 to 122 (LEYL…PITT), 123 to 147 (TLKH…GNLT), 148 to 168 (QLNF…LPIA), 169 to 196 (HLHL…ILNT), 197 to 219 (KKLH…SANS), 220 to 250 (LGCL…GGPT), 251 to 277 (LLNF…WPKP), 278 to 303 (IEYL…YKTT), 304 to 330 (LKAL…VFSE), 331 to 354 (MNIL…EPST), 355 to 378 (FKFL…TLAR), 379 to 404 (LETL…DMLS), 405 to 428 (LETL…SWVG), 429 to 449 (SIVV…RCLP), 450 to 473 (PRIK…TGLE), 474 to 495 (TLQE…GIFS), and 496 to 519 (SLSI…QSCQ). An N-linked (GlcNAc...) asparagine glycan is attached at Asn63. Cys117 and Cys140 are oxidised to a cystine. An N-linked (GlcNAc...) asparagine glycan is attached at Asn145. Cys235 and Cys265 are disulfide-bonded. N-linked (GlcNAc...) asparagine glycosylation is found at Asn253 and Asn285. Cys348 and Cys373 are disulfide-bonded. Residue Asn359 is glycosylated (N-linked (GlcNAc...) asparagine). 2 N-linked (GlcNAc...) asparagine glycosylation sites follow: Asn423 and Asn434. Residues Cys424 and Cys447 are joined by a disulfide bond. The region spanning 520 to 575 (KIRSLKAGNNPFQCSCELRDFIQSVGQVSSDVVEGWPESYKCDYPESYKGTPLKDF) is the LRRCT domain. A helical transmembrane segment spans residues 585 to 605 (ALLIITIVVPGLVLAVAVTVL). The Cytoplasmic portion of the chain corresponds to 606-793 (CIYLDLPWYL…KLMEKAAEIH (188 aa)). One can recognise a TIR domain in the interval 640-781 (LQFHAFISYS…LFWANLRASI (142 aa)).

Belongs to the Toll-like receptor family. As to quaternary structure, homodimer (via cytoplasmic TIR domain). Heterodimer with TLR2 via their respective extracellular domains. Binds MYD88 via their respective TIR domains. Interacts with CD36, following CD36 stimulation by oxLDL or amyloid-beta 42, and forms a heterodimer with TLR4. The trimeric complex is internalized and triggers inflammatory response. LYN kinase activity facilitates TLR4-TLR6 heterodimerization and signal initiation. The heterodimer TLR2:TLR6 interacts with CD14 and CD36 in response to triacylated lipopeptides. In terms of tissue distribution, highest expression levels seen in blood and lymph node, intermediate expression seen in spleen and lowest expression seen in the liver, lung and udder cistern.

It localises to the cell membrane. The protein localises to the cytoplasmic vesicle. The protein resides in the phagosome membrane. It is found in the membrane raft. Its subcellular location is the golgi apparatus. Participates in the innate immune response to Gram-positive bacteria and fungi. Specifically recognizes diacylated and, to a lesser extent, triacylated lipopeptides. In response to diacylated lipopeptides, forms the activation cluster TLR2:TLR6:CD14:CD36, this cluster triggers signaling from the cell surface and subsequently is targeted to the Golgi in a lipid-raft dependent pathway. Acts via MYD88 and TRAF6, leading to NF-kappa-B activation, cytokine secretion and the inflammatory response. Recognizes mycoplasmal macrophage-activating lipopeptide-2kD (MALP-2), soluble tuberculosis factor (STF), phenol-soluble modulin (PSM) and B.burgdorferi outer surface protein A lipoprotein (OspA-L) cooperatively with TLR2. In complex with TLR4, promotes sterile inflammation in monocytes/macrophages in response to oxidized low-density lipoprotein (oxLDL) or amyloid-beta 42. In this context, the initial signal is provided by oxLDL- or amyloid-beta 42-binding to CD36. This event induces the formation of a heterodimer of TLR4 and TLR6, which is rapidly internalized and triggers inflammatory response, leading to the NF-kappa-B-dependent production of CXCL1, CXCL2 and CCL9 cytokines, via MYD88 signaling pathway, and CCL5 cytokine, via TICAM1 signaling pathway, as well as IL1B secretion. The sequence is that of Toll-like receptor 6 from Bos taurus (Bovine).